The sequence spans 1086 residues: NAD(P) transhydrogenase, mitochondrial (1086 aa).

Residues 1–43 constitute a mitochondrion transit peptide; that stretch reads MAHLLKTVVAGCSCPFLSNLGSSKVLPGKRDFVRTLRTHQALW. Over 44–474 the chain is Mitochondrial matrix; it reads CKSPVKPGIP…TVSMYTKTLT (431 aa). K70 is modified (N6-acetyllysine). K117 is modified (N6-succinyllysine). 182 to 184 contributes to the NAD(+) binding site; it reads RVT. The residue at position 224 (K224) is an N6-succinyllysine. NAD(+) is bound by residues V237, 257–259, and G287; that span reads DTR. N6-succinyllysine is present on K294. NAD(+)-binding residues include E300 and L319. K331 carries the N6-succinyllysine modification. K397 is subject to N6-acetyllysine. The next 4 membrane-spanning stretches (helical) occupy residues 475-493, 501-521, 527-546, and 558-578; these read TASV…GIVA, MVTT…GVTP, LMSV…LALM, and SLAA…FLVT. At 579–595 the chain is on the mitochondrial matrix side; sequence QRMLDMFKRPTDPPEYN. Helical transmembrane passes span 596–616, 622–642, 646–666, 672–691, and 702–722; these read YLYL…LYGG, IMYL…STQG, LGNA…LGGL, LLAQ…LTIA, and LVAA…MAEY. The Cytoplasmic portion of the chain corresponds to 723 to 739; that stretch reads IVEYPHFAMDATSNFTK. 5 helical membrane passes run 740 to 760, 778 to 797, 801 to 819, 833 to 853, and 857 to 879; these read IVAY…LVAY, HALN…PFMA, FTTG…TLMG, VVIT…GFLL, and LLTI…MCVA. At 880–1086 the chain is on the mitochondrial matrix side; the sequence is MNRSLANVIL…QAKVRESYQK (207 aa). NADP(+) is bound by residues Y933, 965–970, 1007–1011, 1026–1027, 1042–1049, and 1068–1069; these read VAGRMP, GANDT, GM, KRSLGVGY, and DA. K1079 is modified (N6-succinyllysine).

This sequence in the N-terminal section; belongs to the AlaDH/PNT family. It in the C-terminal section; belongs to the PNT beta subunit family. In terms of assembly, homodimer. In terms of tissue distribution, widely expressed with expression most readily detectable in adrenal, heart, kidney, thyroid and adipose tissues.

It localises to the mitochondrion inner membrane. It carries out the reaction NAD(+) + NADPH + H(+)(in) = NADH + NADP(+) + H(+)(out). The transhydrogenation between NADH and NADP is coupled to respiration and ATP hydrolysis and functions as a proton pump across the membrane. May play a role in reactive oxygen species (ROS) detoxification in the adrenal gland. The polypeptide is NAD(P) transhydrogenase, mitochondrial (Nnt) (Mus musculus (Mouse)).